The following is a 506-amino-acid chain: Transforming growth factor beta-1-induced transcript 1 protein (506 aa).

An LD motif 1 motif is present at residues 3–15; that stretch reads DLDALLADLQITT. Positions 15 to 62 are disordered; sequence TPPRCPVLLTDSPEKPQPTETRPPPPPYDPKTAMSNKTSDHETFPVDK. Residues 52–62 show a composition bias toward basic and acidic residues; it reads TSDHETFPVDK. 2 short sequence motifs (LD motif) span residues 87–99 and 139–150; these read ELDRLLNELNATQ and ELDRLMASLSDF. Disordered regions lie at residues 154-201 and 221-244; these read NTVS…PTPK and SDEVTASRVPDSVSGSKVPEATSV. Over residues 168 to 177 the composition is skewed to basic and acidic residues; it reads GSEEVSRPGD. Positions 248-260 match the LD motif 4 motif; that stretch reads DLDSMLVKLQSGL. LIM zinc-binding domains lie at 271-330, 331-388, 389-448, and 449-506; these read GLCE…LYAP, RCAL…RLFG, AVCA…RRGS, and LCAG…RLYG.

Belongs to the paxillin family. As to quaternary structure, interacts with tcf3 and tcf7l2.

It localises to the cell junction. The protein resides in the focal adhesion. The protein localises to the nucleus matrix. It is found in the cytoplasm. Its subcellular location is the cytoskeleton. In terms of biological role, functions as a molecular adapter coordinating multiple protein-protein interactions at the focal adhesion complex and in the nucleus. May regulate both Wnt and steroid signaling pathways and play a role in the processes of cell growth, proliferation, migration, differentiation and senescence. May have a zinc-dependent DNA-binding activity. The sequence is that of Transforming growth factor beta-1-induced transcript 1 protein (tgfb1i1) from Xenopus laevis (African clawed frog).